Reading from the N-terminus, the 270-residue chain is Phosphoribosylformylglycinamidine synthase subunit PurQ (270 aa).

The Glutamine amidotransferase type-1 domain maps to 5-251 (ALVLHATGTN…VIRERDSEEE (247 aa)). Catalysis depends on Cys-95, which acts as the Nucleophile. Residues His-236 and Glu-238 contribute to the active site.

In terms of assembly, part of the FGAM synthase complex composed of 1 PurL, 1 PurQ and 2 PurS subunits.

The protein resides in the cytoplasm. It carries out the reaction N(2)-formyl-N(1)-(5-phospho-beta-D-ribosyl)glycinamide + L-glutamine + ATP + H2O = 2-formamido-N(1)-(5-O-phospho-beta-D-ribosyl)acetamidine + L-glutamate + ADP + phosphate + H(+). The enzyme catalyses L-glutamine + H2O = L-glutamate + NH4(+). It functions in the pathway purine metabolism; IMP biosynthesis via de novo pathway; 5-amino-1-(5-phospho-D-ribosyl)imidazole from N(2)-formyl-N(1)-(5-phospho-D-ribosyl)glycinamide: step 1/2. In terms of biological role, part of the phosphoribosylformylglycinamidine synthase complex involved in the purines biosynthetic pathway. Catalyzes the ATP-dependent conversion of formylglycinamide ribonucleotide (FGAR) and glutamine to yield formylglycinamidine ribonucleotide (FGAM) and glutamate. The FGAM synthase complex is composed of three subunits. PurQ produces an ammonia molecule by converting glutamine to glutamate. PurL transfers the ammonia molecule to FGAR to form FGAM in an ATP-dependent manner. PurS interacts with PurQ and PurL and is thought to assist in the transfer of the ammonia molecule from PurQ to PurL. In Treponema denticola (strain ATCC 35405 / DSM 14222 / CIP 103919 / JCM 8153 / KCTC 15104), this protein is Phosphoribosylformylglycinamidine synthase subunit PurQ.